The following is a 564-amino-acid chain: Isopullulanase (564 aa).

The first 19 residues, methionine 1–alanine 19, serve as a signal peptide directing secretion. N-linked (GlcNAc...) asparagine glycosylation is found at asparagine 24, asparagine 94, asparagine 115, asparagine 138, asparagine 186, asparagine 210, asparagine 305, asparagine 381, asparagine 448, asparagine 455, asparagine 460, asparagine 486, asparagine 491, asparagine 503, and asparagine 535.

N-glycosylated.

The protein resides in the secreted. It carries out the reaction Hydrolysis of pullulan to isopanose (6-alpha-maltosylglucose).. Its function is as follows. Hydrolyzes pullulan, a linear polymer which is composed of maltotriose units with alpha-1,6 glucosidic linkages, to produce isopanose (Glca1-4Glca1-6Glc). This Aspergillus niger protein is Isopullulanase (ipuA).